A 308-amino-acid polypeptide reads, in one-letter code: Taste receptor type 2 member 10 (308 aa).

Topologically, residues 1–6 (MLSVVE) are extracellular. A helical transmembrane segment spans residues 7–27 (GIFIFVVISESVFGVLGNGFI). Topologically, residues 28–42 (GLVNCIDCAKNKLST) are cytoplasmic. A helical membrane pass occupies residues 43-63 (IGFILTGLAISRIFLIWVIIT). Residues 64 to 100 (DGFIQIFSPDIYASGNLIEYISYIWVIGNQSSMWFAT) lie on the Extracellular side of the membrane. N-linked (GlcNAc...) asparagine glycosylation is present at Asn92. A helical transmembrane segment spans residues 101 to 121 (SLSIFYFLKIANFSNYIFLWL). Residues 122–126 (KSRTN) lie on the Cytoplasmic side of the membrane. Residues 127–147 (MVLPFMMAFLLISSLLNFAHI) form a helical membrane-spanning segment. Residues 148 to 179 (VKILNDHKMKNDTVWHLNMYKSEYFIKQILLN) lie on the Extracellular side of the membrane. A glycan (N-linked (GlcNAc...) asparagine) is linked at Asn158. Residues 180 to 200 (LGVIFFFTLSLITCVLLIISL) form a helical membrane-spanning segment. At 201–227 (WRHNRQMQSNVTGLRDSNTEAHVKAMK) the chain is on the cytoplasmic side. A helical transmembrane segment spans residues 228 to 248 (VLISFIILFILYFIGMALEIS). Residues 249–257 (RFTVPENKL) are Extracellular-facing. Residues 258–278 (LLMFGMTTTAIYPWGHSFILI) traverse the membrane as a helical segment. The Cytoplasmic portion of the chain corresponds to 279–308 (LGNSKLKQASLRVLQQLKCCEKRKKSQSHI).

Belongs to the G-protein coupled receptor T2R family.

The protein localises to the membrane. Its function is as follows. Receptor that may play a role in the perception of bitterness and is gustducin-linked. May play a role in sensing the chemical composition of the gastrointestinal content. The activity of this receptor may stimulate alpha gustducin, mediate PLC-beta-2 activation and lead to the gating of TRPM5. The protein is Taste receptor type 2 member 10 (TAS2R10) of Pongo pygmaeus (Bornean orangutan).